The sequence spans 207 residues: Probable molybdenum cofactor guanylyltransferase (207 aa).

Residues 9–11, K21, and D97 each bind GTP; that span reads LAG. Residue D97 participates in Mg(2+) binding.

This sequence belongs to the MobA family. It depends on Mg(2+) as a cofactor.

It localises to the cytoplasm. The catalysed reaction is Mo-molybdopterin + GTP + H(+) = Mo-molybdopterin guanine dinucleotide + diphosphate. Functionally, transfers a GMP moiety from GTP to Mo-molybdopterin (Mo-MPT) cofactor (Moco or molybdenum cofactor) to form Mo-molybdopterin guanine dinucleotide (Mo-MGD) cofactor. This chain is Probable molybdenum cofactor guanylyltransferase, found in Nostoc sp. (strain PCC 7120 / SAG 25.82 / UTEX 2576).